The chain runs to 402 residues: Triose phosphate/phosphate translocator, chloroplastic (402 aa).

The N-terminal 72 residues, 1–72 (MESRVLSRAT…KGASLLRPCP (72 aa)), are a transit peptide targeting the chloroplast. The Chloroplast intermembrane portion of the chain corresponds to 73–96 (ATAGGNDSAGEEKVAPVGFFSRYP). Residues 97 to 117 (ALTTGFFFFTWYFLNVIFNIL) form a helical membrane-spanning segment. At 118–129 (NKKIYNYFPYPY) the chain is on the lumenal side. The chain crosses the membrane as a helical span at residues 130–150 (FVSVIHLAVGVVYCLVSWTVG). Residues 151–207 (LPKRAPIDGNLLKLLIPVAVCHALGHVTSNVSFAAVAVSFTHTVKALEPFFNAAASQ) are Chloroplast intermembrane-facing. Residues 208–228 (FILGQSIPITLWLSLAPVVIG) traverse the membrane as a helical segment. Residues 229-272 (VSMASLTELSFNWLGFISAMISNISFTYRSIYSKKAMTDMDSTN) lie on the Lumenal side of the membrane. A helical membrane pass occupies residues 273–292 (IYAYISIIALIVCIPPALII). Topologically, residues 293 to 370 (EGPTLLKTGF…IIFGNKISTQ (78 aa)) are chloroplast intermembrane. Residues 371 to 391 (TGIGTGIAIAGVALYSFIKAQ) traverse the membrane as a helical segment. At 392 to 402 (IEEEKRQAKAA) the chain is on the lumenal side.

The protein belongs to the TPT transporter family. TPT (TC 2.A.7.9) subfamily. As to quaternary structure, homodimer.

Its subcellular location is the plastid. It localises to the chloroplast membrane. Mediates the export of fixed carbons from the chloroplasts into the cytosol in the form of triose phosphates. The polypeptide is Triose phosphate/phosphate translocator, chloroplastic (Pisum sativum (Garden pea)).